The following is a 260-amino-acid chain: Small ribosomal subunit protein uS2 (260 aa).

The tract at residues 225–260 (KGQTQTEAAPNAQAAPEAAAPAEQPAEEAAAASSEG) is disordered. The span at 231–260 (EAAPNAQAAPEAAAPAEQPAEEAAAASSEG) shows a compositional bias: low complexity.

It belongs to the universal ribosomal protein uS2 family.

The chain is Small ribosomal subunit protein uS2 from Rhodopirellula baltica (strain DSM 10527 / NCIMB 13988 / SH1).